Here is a 35-residue protein sequence, read N- to C-terminus: MEALVYTFLLVSTLGIIFFAIFFREPPRISTKKMK.

A helical transmembrane segment spans residues 3-23; it reads ALVYTFLLVSTLGIIFFAIFF.

This sequence belongs to the PsbT family. PSII is composed of 1 copy each of membrane proteins PsbA, PsbB, PsbC, PsbD, PsbE, PsbF, PsbH, PsbI, PsbJ, PsbK, PsbL, PsbM, PsbT, PsbY, PsbZ, Psb30/Ycf12, at least 3 peripheral proteins of the oxygen-evolving complex and a large number of cofactors. It forms dimeric complexes.

It localises to the plastid. Its subcellular location is the chloroplast thylakoid membrane. Its function is as follows. Found at the monomer-monomer interface of the photosystem II (PS II) dimer, plays a role in assembly and dimerization of PSII. PSII is a light-driven water plastoquinone oxidoreductase, using light energy to abstract electrons from H(2)O, generating a proton gradient subsequently used for ATP formation. In Saururus cernuus (Lizard's tail), this protein is Photosystem II reaction center protein T.